Here is a 734-residue protein sequence, read N- to C-terminus: Photosystem I P700 chlorophyll a apoprotein A2 (734 aa).

The next 8 helical transmembrane spans lie at 46–69 (IFASHFGQLAIIFLWTSGNLFHVA), 135–158 (LYTGALFLLFLSALSLIGGWLHLQ), 175–199 (LNHHLSGLFGVSSLAWTGHLVHVAI), 273–291 (MAHHHLAIAILFLIAGHMY), 330–353 (IHFQLGLALASLGVITSLVAQHMY), 369–395 (AALYTHHQYIAGFIMTGAFAHGAIFFI), 417–439 (AIISHLSWASLFLGFHTLGLYVH), and 517–535 (FLVHHAIALGLHTTTLILV). [4Fe-4S] cluster is bound by residues C559 and C568. Helical transmembrane passes span 575–596 (AFYLAVFWMLNTIGWVTFYWHW) and 643–665 (LSVWAWMFLFGHLVWATGFMFLI). Positions 654, 662, and 670 each coordinate chlorophyll a. W671 contacts phylloquinone. Residues 707–727 (LVGLAHFSVGYIFTYAAFLIA) form a helical membrane-spanning segment.

Belongs to the PsaA/PsaB family. In terms of assembly, the PsaA/B heterodimer binds the P700 chlorophyll special pair and subsequent electron acceptors. PSI consists of a core antenna complex that captures photons, and an electron transfer chain that converts photonic excitation into a charge separation. The eukaryotic PSI reaction center is composed of at least 11 subunits. It depends on P700 is a chlorophyll a/chlorophyll a' dimer, A0 is one or more chlorophyll a, A1 is one or both phylloquinones and FX is a shared 4Fe-4S iron-sulfur center. as a cofactor.

The protein localises to the plastid. It localises to the chloroplast thylakoid membrane. The catalysed reaction is reduced [plastocyanin] + hnu + oxidized [2Fe-2S]-[ferredoxin] = oxidized [plastocyanin] + reduced [2Fe-2S]-[ferredoxin]. In terms of biological role, psaA and PsaB bind P700, the primary electron donor of photosystem I (PSI), as well as the electron acceptors A0, A1 and FX. PSI is a plastocyanin-ferredoxin oxidoreductase, converting photonic excitation into a charge separation, which transfers an electron from the donor P700 chlorophyll pair to the spectroscopically characterized acceptors A0, A1, FX, FA and FB in turn. Oxidized P700 is reduced on the lumenal side of the thylakoid membrane by plastocyanin. The protein is Photosystem I P700 chlorophyll a apoprotein A2 of Crucihimalaya wallichii (Rock-cress).